The chain runs to 584 residues: Aspartate--tRNA(Asp/Asn) ligase (584 aa).

Position 177 (Glu-177) interacts with L-aspartate. The interval 201–204 (QLFK) is aspartate. Arg-223 contributes to the L-aspartate binding site. ATP contacts are provided by residues 223 to 225 (RDE) and Gln-232. His-447 lines the L-aspartate pocket. Position 481 (Glu-481) interacts with ATP. Arg-488 lines the L-aspartate pocket. 533–536 (GLDR) is a binding site for ATP.

Belongs to the class-II aminoacyl-tRNA synthetase family. Type 1 subfamily. Homodimer.

The protein resides in the cytoplasm. The catalysed reaction is tRNA(Asx) + L-aspartate + ATP = L-aspartyl-tRNA(Asx) + AMP + diphosphate. Its function is as follows. Aspartyl-tRNA synthetase with relaxed tRNA specificity since it is able to aspartylate not only its cognate tRNA(Asp) but also tRNA(Asn). Reaction proceeds in two steps: L-aspartate is first activated by ATP to form Asp-AMP and then transferred to the acceptor end of tRNA(Asp/Asn). This is Aspartate--tRNA(Asp/Asn) ligase from Chlamydia caviae (strain ATCC VR-813 / DSM 19441 / 03DC25 / GPIC) (Chlamydophila caviae).